Reading from the N-terminus, the 304-residue chain is 5-hmdU DNA kinase 2 (304 aa).

The segment at 260–304 is disordered; sequence VGGQDPLAHRVPEKPQKASKTKNKAVAKEEPKTSSVSLLGLMRKA. Residues 266–275 are compositionally biased toward basic and acidic residues; the sequence is LAHRVPEKPQ.

It belongs to the thymidylate kinase family. 5-hmdU DNA kinase subfamily.

The catalysed reaction is 5-hydroxymethyl-dUMP in DNA + ATP = 5-phosphomethyl-dUMP in DNA + ADP + H(+). Its function is as follows. Phosphorylates 5-hydroxymethyluracil (5hmdU) into 5-phosphomethyl-2'-deoxyuridine (5- PmdU) on DNA as a step in the pathway leading to thymidine hypermodifications in the viral genome. The phosphate is added internally to the DNA polymer. As a final result of the pathway of hypermodification, 5-aminoethoxy-2'-deoxymethyluridine (5-NeOmdU) substitutes for about 40% of the thymidines in the viral DNA. These modifications probably prevent degradation of viral genome by the host restriction-modification antiviral defense system. In Salmonella typhi, this protein is 5-hmdU DNA kinase 2.